The chain runs to 453 residues: DNA repair protein RadA (453 aa).

Residues 10 to 27 (CQECGYQSPKYLGRCPNC) form a C4-type zinc finger. An ATP-binding site is contributed by 95–102 (GDPGIGKS). Residues 251 to 255 (KNRFG) carry the RadA KNRFG motif motif. The segment at 350–453 (DAYLKSAGGV…VGQVLKAVFS (104 aa)) is lon-protease-like.

This sequence belongs to the RecA family. RadA subfamily.

In terms of biological role, DNA-dependent ATPase involved in processing of recombination intermediates, plays a role in repairing DNA breaks. Stimulates the branch migration of RecA-mediated strand transfer reactions, allowing the 3' invading strand to extend heteroduplex DNA faster. Binds ssDNA in the presence of ADP but not other nucleotides, has ATPase activity that is stimulated by ssDNA and various branched DNA structures, but inhibited by SSB. Does not have RecA's homology-searching function. The sequence is that of DNA repair protein RadA from Streptococcus pyogenes serotype M3 (strain ATCC BAA-595 / MGAS315).